The sequence spans 840 residues: Phosphatidylinositol-glycan-specific phospholipase D (840 aa).

Positions 1–23 (MSAFRLWPGLLIMLGSLCHRGSP) are cleaved as a signal peptide. N-linked (GlcNAc...) asparagine glycosylation is found at asparagine 94, asparagine 271, asparagine 292, asparagine 307, and asparagine 321. FG-GAP repeat units lie at residues 367 to 428 (SPLA…GLPP), 436 to 497 (EAHR…GGMS), 499 to 559 (SPNI…LSDK), 563 to 623 (NVEA…SLGR), 633 to 693 (QSWF…GATR), 704 to 770 (LLLS…TLGD), and 788 to 840 (QYVL…LGSD). N-linked (GlcNAc...) asparagine glycosylation is found at asparagine 501, asparagine 568, asparagine 591, asparagine 604, and asparagine 659.

It belongs to the GPLD1 family. As to quaternary structure, monomer.

The protein resides in the secreted. It catalyses the reaction a 6-(alpha-D-glucosaminyl)-1-(1,2-diacyl-sn-glycero-3-phospho)-1D-myo-inositol + H2O = 6-(alpha-D-glucosaminyl)-1D-myo-inositol + a 1,2-diacyl-sn-glycero-3-phosphate + H(+). This protein hydrolyzes the inositol phosphate linkage in proteins anchored by phosphatidylinositol glycans (GPI-anchor) thus releasing these proteins from the membrane. The chain is Phosphatidylinositol-glycan-specific phospholipase D (GPLD1) from Homo sapiens (Human).